Reading from the N-terminus, the 359-residue chain is AA9 family lytic polysaccharide monooxygenase C (359 aa).

Positions 1–16 (MKTGSILAALVASASA) are cleaved as a signal peptide. Residues His17 and His99 each coordinate Cu(2+). 2 cysteine pairs are disulfide-bonded: Cys55-Cys185 and Cys155-Cys243. 2 residues coordinate O2: His171 and Gln180. Tyr182 provides a ligand contact to Cu(2+). N-linked (GlcNAc...) asparagine glycans are attached at residues Asn189 and Asn284. Residues 244-320 (PAGGSGGSSP…NPQPTNGGNS (77 aa)) are disordered. Residues 251 to 296 (SSPAPATTASTPKPTSASAPKPVSTTASTPKPTNGSGSGTGAAHST) show a composition bias toward low complexity. Residues 307-319 (TKASNPQPTNGGN) are compositionally biased toward polar residues. In terms of domain architecture, CBM1 spans 323–358 (RAAALYGQCGGKGWTGPTSCASGTCKFSNDWYSQCL).

This sequence belongs to the polysaccharide monooxygenase AA9 family. The cofactor is Cu(2+).

It localises to the secreted. The enzyme catalyses [(1-&gt;4)-beta-D-glucosyl]n+m + reduced acceptor + O2 = 4-dehydro-beta-D-glucosyl-[(1-&gt;4)-beta-D-glucosyl]n-1 + [(1-&gt;4)-beta-D-glucosyl]m + acceptor + H2O.. With respect to regulation, activity in inhibited by excessive amounts of H(2)O(2). In terms of biological role, lytic polysaccharide monooxygenase (LPMO) that depolymerizes crystalline and amorphous polysaccharides via the oxidation of scissile alpha- or beta-(1-4)-glycosidic bonds, yielding C4 oxidation products. Catalysis by LPMOs requires the reduction of the active-site copper from Cu(II) to Cu(I) by a reducing agent and H(2)O(2) or O(2) as a cosubstrate. Degrades various hemicelluloses, in particular xyloglucan. Active on tamarind xyloglucan and konjac glucomannan. Acts on the glucose backbone of xyloglucan, accepting various substitutions (xylose, galactose) in almost allpositions. In contrast to all previously characterized LPMOs, which are active only on polysaccharides, is able to cleave soluble cello-oligosaccharides as short as a tetramer. The cello-oligosaccharide products released by this enzyme contain a C4 gemdiol/keto group at the non-reducing end. Binds to the inner wood cell wall layer and consumes enzymatically generated H(2)O(2). This Neurospora crassa (strain ATCC 24698 / 74-OR23-1A / CBS 708.71 / DSM 1257 / FGSC 987) protein is AA9 family lytic polysaccharide monooxygenase C (gh61-3).